A 426-amino-acid chain; its full sequence is Glutamate-1-semialdehyde 2,1-aminomutase (426 aa).

K265 carries the post-translational modification N6-(pyridoxal phosphate)lysine.

The protein belongs to the class-III pyridoxal-phosphate-dependent aminotransferase family. HemL subfamily. Homodimer. The cofactor is pyridoxal 5'-phosphate.

Its subcellular location is the cytoplasm. It catalyses the reaction (S)-4-amino-5-oxopentanoate = 5-aminolevulinate. It participates in porphyrin-containing compound metabolism; protoporphyrin-IX biosynthesis; 5-aminolevulinate from L-glutamyl-tRNA(Glu): step 2/2. The polypeptide is Glutamate-1-semialdehyde 2,1-aminomutase (Escherichia coli O9:H4 (strain HS)).